The chain runs to 353 residues: 2-oxoglutarate-Fe(II) type oxidoreductase ppzD (353 aa).

A Fe2OG dioxygenase domain is found at 181 to 292 (NTSELRLNHY…RYSVAYFGKP (112 aa)). H208, D210, and H268 together coordinate Fe cation. R283 is a 2-oxoglutarate binding site.

This sequence belongs to the iron/ascorbate-dependent oxidoreductase family. Fe(2+) serves as cofactor.

The enzyme catalyses L-proline + 2-oxoglutarate + O2 = trans-4-hydroxy-L-proline + succinate + CO2. The catalysed reaction is L-proline + 2-oxoglutarate + O2 = trans-3-hydroxy-L-proline + succinate + CO2. It carries out the reaction D-proline + 2-oxoglutarate + O2 = cis-4-hydroxy-D-proline + succinate + CO2. It participates in secondary metabolite biosynthesis. Its function is as follows. 2-oxoglutarate-Fe(II) type oxidoreductase; part of the gene cluster that mediates the biosynthesis of pyrrolopyrazines, secondary metabolites showing insecticidal activity. Within the pathway, ppzD converts L-proline into trans-4-hydroxy-L-proline as a major product, yielding a key precursor for peramine biosynthesis. PpzD is also able to convert L-proline into trans-3-hydroxy-L-proline. The single multifunctional NRPS ppzA is sufficient to produce peramine via condensation of 1-pyrroline-5-carboxylate and arginine, N-methylation of the alpha-amino group of arginine and reduction of the thioester and the cyclization to form an iminium ion resulting in release from the peptide synthetase. Deprotonation of this intermediate and oxidation of the pyrroline ring would give rise to peramine. In Epichloe species that produce only peramine, the peramine synthetase gene is not localized in a gene cluster, in contrast to Metarhizium species that contain additional pyrrolopyrazine biosynthesis genes. The 2-oxoglutarate-Fe(II) type oxidoreductase ppzC hydroxylates peramine to yield the newly identified compound 8-hydroxyperamine whereas ppzD converts L-proline into trans-4-hydroxy-L-proline, a precursor of peramine biosynthesis. The polypeptide is 2-oxoglutarate-Fe(II) type oxidoreductase ppzD (Metarhizium rileyi (strain RCEF 4871) (Nomuraea rileyi)).